The sequence spans 610 residues: Protein arginine N-methyltransferase 5 (610 aa).

Residues 284-587 (LEIPLQPLCD…VDATKVWYEW (304 aa)) form the SAM-dependent MTase PRMT-type domain. Tyr300 lines the S-adenosyl-L-methionine pocket. Residue Phe303 participates in a protein binding. S-adenosyl-L-methionine is bound by residues 309–310 (KY), Glu368, and 396–397 (DM). A protein contacts are provided by Glu412 and Glu421. Residues Glu412 and Glu421 each act as proton donor/acceptor in the active site. An interaction with vls region spans residues 470 to 610 (AFDYGYVSLL…TRGTGYNMRL (141 aa)).

Belongs to the class I-like SAM-binding methyltransferase superfamily. Protein arginine N-methyltransferase family. Interacts with vls. As to expression, expressed only in ovaries.

The protein resides in the cytoplasm. Functionally, arginine methyltransferase that can both catalyze the formation of omega-N monomethylarginine (MMA) and symmetrical dimethylarginine (sDMA). Specifically mediates the symmetrical dimethylation of arginine residues in the small nuclear ribonucleoproteins SmD1 and SmD3. Required for arginine symmetrical dimethylation of piwi family proteins, piwi, aub and AGO3, during germline development. Required during oogenesis for pole cell formation in the pathway controlled by oskar (osk) and for abdominal segments during early embryogenesis. Involved in nanos (nos) and germ cell mRNAs localization. The sequence is that of Protein arginine N-methyltransferase 5 from Drosophila melanogaster (Fruit fly).